Here is a 102-residue protein sequence, read N- to C-terminus: Small ribosomal subunit protein uS10 (102 aa).

Belongs to the universal ribosomal protein uS10 family. Part of the 30S ribosomal subunit.

In terms of biological role, involved in the binding of tRNA to the ribosomes. This is Small ribosomal subunit protein uS10 from Planobispora rosea.